The primary structure comprises 605 residues: Protein kinase wis1 (605 aa).

The segment covering 1-20 (MSSPNNQPLSCSLRQLSISP) has biased composition (polar residues). The disordered stretch occupies residues 1 to 141 (MSSPNNQPLS…TPPGPFPGGL (141 aa)). 2 stretches are compositionally biased toward low complexity: residues 31–73 (GSLL…SSPS) and 90–105 (RLGR…SLNL). Basic and acidic residues predominate over residues 106-115 (DMKDPSEKPR). Ser-168 carries the post-translational modification Phosphoserine. Residues 188–200 (SQLAGRLSNSPVK) are compositionally biased toward polar residues. Residues 188–263 (SQLAGRLSNS…PSSMASRRGL (76 aa)) form a disordered region. Low complexity predominate over residues 244–256 (SNSNPTSPVSPSS). Ser-253 carries the phosphoserine modification. A Protein kinase domain is found at 320–579 (IIKLEELGKG…YHELANHPWL (260 aa)). Residues 326–334 (LGKGNYGVV) and Lys-349 each bind ATP. Asp-441 acts as the Proton acceptor in catalysis. At Ser-469 the chain carries Phosphoserine. Residue Thr-473 is modified to Phosphothreonine.

This sequence belongs to the protein kinase superfamily. STE Ser/Thr protein kinase family. MAP kinase kinase subfamily. Post-translationally, dephosphorylated by pyp1 and pyp2.

It carries out the reaction L-seryl-[protein] + ATP = O-phospho-L-seryl-[protein] + ADP + H(+). It catalyses the reaction L-threonyl-[protein] + ATP = O-phospho-L-threonyl-[protein] + ADP + H(+). The enzyme catalyses L-tyrosyl-[protein] + ATP = O-phospho-L-tyrosyl-[protein] + ADP + H(+). Dosage-dependent regulator of mitosis with serine/ threonine protein kinase activity. May play a role in the integration of nutritional sensing with the control over entry into mitosis. It may interact with cdc25, wee1 and win1. May activate sty1. In Schizosaccharomyces pombe (strain 972 / ATCC 24843) (Fission yeast), this protein is Protein kinase wis1 (wis1).